The primary structure comprises 328 residues: Gonadotropin-releasing hormone receptor (328 aa).

At 1-38 (MANSDSPEQNENHCSAINSSIPLTPGSLPTLTLSGKIR) the chain is on the extracellular side. N-linked (GlcNAc...) asparagine glycosylation is present at N18. Residues 39–58 (VTVTFFLFLLSTIFNTSFLL) traverse the membrane as a helical segment. At 59-77 (KLQNWTQRKEKRKKLSRMK) the chain is on the cytoplasmic side. A helical transmembrane segment spans residues 78–97 (LLLKHLTLANLLETLIVMPL). Residues 98–115 (DGMWNITVQWYAGELLCK) are Extracellular-facing. N102 carries an N-linked (GlcNAc...) asparagine glycan. C114 and C196 form a disulfide bridge. The helical transmembrane segment at 116 to 137 (VLSYLKLFSMYAPAFMMVVISL) threads the bilayer. At 138–164 (DRSLAITKPLAVKSNSKLGQFMIGLAW) the chain is on the cytoplasmic side. The chain crosses the membrane as a helical span at residues 165–184 (LLSSIFAGPQLYIFGMIHLA). The Extracellular portion of the chain corresponds to 185-212 (DDSGQTEGFSQCVTHCSFPQWWHQAFYN). A helical membrane pass occupies residues 213-232 (FFTFSCLFIIPLLIMVICNA). Residues 233–281 (KIIFTLTRVLHQDPHKLQLNQSKNNIPRARLRTLKMTVAFATSFTVCWT) are Cytoplasmic-facing. A helical transmembrane segment spans residues 282–300 (PYYVLGIWYWFDPDMVNRV). Topologically, residues 301 to 306 (SDPVNH) are extracellular. A helical membrane pass occupies residues 307 to 326 (FFFLFAFLNPCFDPLIYGYF). At 327–328 (SL) the chain is on the cytoplasmic side.

The protein belongs to the G-protein coupled receptor 1 family.

It localises to the cell membrane. Its function is as follows. Receptor for gonadotropin releasing hormone (GnRH) that mediates the action of GnRH to stimulate the secretion of the gonadotropic hormones luteinizing hormone (LH) and follicle-stimulating hormone (FSH). This receptor mediates its action by association with G-proteins that activate a phosphatidylinositol-calcium second messenger system. This Bos taurus (Bovine) protein is Gonadotropin-releasing hormone receptor (GNRHR).